Reading from the N-terminus, the 418-residue chain is 3-isopropylmalate dehydratase large subunit (418 aa).

Positions 297, 357, and 360 each coordinate [4Fe-4S] cluster.

The protein belongs to the aconitase/IPM isomerase family. LeuC type 2 subfamily. In terms of assembly, heterodimer of LeuC and LeuD. It depends on [4Fe-4S] cluster as a cofactor.

The catalysed reaction is (2R,3S)-3-isopropylmalate = (2S)-2-isopropylmalate. The protein operates within amino-acid biosynthesis; L-leucine biosynthesis; L-leucine from 3-methyl-2-oxobutanoate: step 2/4. Catalyzes the isomerization between 2-isopropylmalate and 3-isopropylmalate, via the formation of 2-isopropylmaleate. The protein is 3-isopropylmalate dehydratase large subunit of Elusimicrobium minutum (strain Pei191).